The chain runs to 234 residues: Response regulator RppA (234 aa).

Residues 2–118 (RILLVEDETD…ELLARLRALQ (117 aa)) enclose the Response regulatory domain. Asp53 bears the 4-aspartylphosphate mark. A DNA-binding region (ompR/PhoB-type) is located at residues 126–232 (PQILTLGNFS…VPGQGYRFTL (107 aa)).

Interacts with histidine kinase Hik2; may accept phosphate from Hik2.

In terms of biological role, member of two-component regulatory system RppA/RppB, involved in the establishment of the appropriate stoichiometry between the 2 photosystems. It senses changes in the plastoquinone (PQ) redox poise. Another group shows this two-component pair, renamed NrsR/NrsS, controls the nickel-dependent expression of the nrsBACD operon; they suggest the photosystem-related activities seen earlier are due to the expression of NrsS (RppB) in the absence of its natural substrate NrsR (RppA). May accept phosphate from Hik2 in a possible Hik2/RppA two-component system. This chain is Response regulator RppA, found in Synechocystis sp. (strain ATCC 27184 / PCC 6803 / Kazusa).